The sequence spans 332 residues: MRHLLSAADLGRDEAVALLDTAETMADTQSRAIKKLPPLRGLTVVNLFFEDSTRTRISFEAAAKRLSADVINFSAKGSSVSKGESLKDTAQTLQAMGADAVVVRHWASGAPHRLAHAGWIAAPVINAGDGTHQHPTQALLDAFTLRRRLAGPDGPIGTDLAGRHVVVVGDVLHSRVARSNVDLLSTLGARVTLVAPPTLLPVGVESWPCEVGYDLDAAIDAGPDAVMMLRVQRERMSSGFFPSEREYARAYGLDAARVSRLGKHALVMHPGPMNRGLEISADAADSARSTVVEQVTNGVSVRMAVLYTLLAGGPDGDSTTSPGSGPEGGTTP.

Carbamoyl phosphate contacts are provided by Arg-54 and Thr-55. Lys-82 contributes to the L-aspartate binding site. Carbamoyl phosphate contacts are provided by Arg-104, His-134, and Gln-137. Arg-175 and Arg-230 together coordinate L-aspartate. The carbamoyl phosphate site is built by Gly-271 and Pro-272. Residues 312–332 (GGPDGDSTTSPGSGPEGGTTP) are disordered.

The protein belongs to the aspartate/ornithine carbamoyltransferase superfamily. ATCase family. In terms of assembly, heterododecamer (2C3:3R2) of six catalytic PyrB chains organized as two trimers (C3), and six regulatory PyrI chains organized as three dimers (R2).

It catalyses the reaction carbamoyl phosphate + L-aspartate = N-carbamoyl-L-aspartate + phosphate + H(+). It participates in pyrimidine metabolism; UMP biosynthesis via de novo pathway; (S)-dihydroorotate from bicarbonate: step 2/3. Functionally, catalyzes the condensation of carbamoyl phosphate and aspartate to form carbamoyl aspartate and inorganic phosphate, the committed step in the de novo pyrimidine nucleotide biosynthesis pathway. The sequence is that of Aspartate carbamoyltransferase catalytic subunit from Beutenbergia cavernae (strain ATCC BAA-8 / DSM 12333 / CCUG 43141 / JCM 11478 / NBRC 16432 / NCIMB 13614 / HKI 0122).